The sequence spans 527 residues: Laccase-5 (527 aa).

The signal sequence occupies residues 1-23 (MGKFHSFVNVVALSLSLSGRVFG). In terms of domain architecture, Plastocyanin-like 1 spans 25-150 (IGPVTDLTIS…DGLRGPLVVY (126 aa)). 2 N-linked (GlcNAc...) asparagine glycosylation sites follow: N74 and N77. Cu cation-binding residues include H87, H89, H132, and H134. Intrachain disulfides connect C108/C516 and C140/C230. N156, N209, N233, N242, N276, N317, N358, N366, N393, and N402 each carry an N-linked (GlcNAc...) asparagine glycan. Residues 162–306 (VDDDTTVITL…GGVNSAILRY (145 aa)) form the Plastocyanin-like 2 domain. Residues 373–498 (TVPVLLQILS…AGFAIVFAED (126 aa)) enclose the Plastocyanin-like 3 domain. Positions 425, 428, 430, 480, 481, 482, and 486 each coordinate Cu cation.

Belongs to the multicopper oxidase family. Cu cation is required as a cofactor.

The protein localises to the secreted. The catalysed reaction is 4 hydroquinone + O2 = 4 benzosemiquinone + 2 H2O. In terms of biological role, lignin degradation and detoxification of lignin-derived products. The sequence is that of Laccase-5 (LCC5) from Trametes versicolor (White-rot fungus).